The following is a 290-amino-acid chain: Small ribosomal subunit protein uS2 (290 aa).

Belongs to the universal ribosomal protein uS2 family. As to quaternary structure, component of the small ribosomal subunit. Mature ribosomes consist of a small (40S) and a large (60S) subunit. The 40S subunit contains about 33 different proteins and 1 molecule of RNA (18S). The 60S subunit contains about 49 different proteins and 3 molecules of RNA (28S, 5.8S and 5S). Interacts with ribosomal protein S21.

Its subcellular location is the cytoplasm. Functionally, required for the assembly and/or stability of the 40S ribosomal subunit. Required for the processing of the 20S rRNA-precursor to mature 18S rRNA in a late step of the maturation of 40S ribosomal subunits. The protein is Small ribosomal subunit protein uS2 of Culex quinquefasciatus (Southern house mosquito).